The chain runs to 235 residues: Orotidine 5'-phosphate decarboxylase (235 aa).

Substrate is bound by residues Asp-16, Lys-38, 65–74 (DLKLHDIGNT), Thr-120, Arg-181, Gln-190, Gly-210, and Arg-211. Lys-67 (proton donor) is an active-site residue.

This sequence belongs to the OMP decarboxylase family. Type 1 subfamily. As to quaternary structure, homodimer.

The catalysed reaction is orotidine 5'-phosphate + H(+) = UMP + CO2. It participates in pyrimidine metabolism; UMP biosynthesis via de novo pathway; UMP from orotate: step 2/2. Catalyzes the decarboxylation of orotidine 5'-monophosphate (OMP) to uridine 5'-monophosphate (UMP). The sequence is that of Orotidine 5'-phosphate decarboxylase from Rhodopseudomonas palustris (strain BisA53).